A 506-amino-acid polypeptide reads, in one-letter code: Kynurenine 3-monooxygenase (506 aa).

The tract at residues 153–174 is disordered; sequence QETSLLPGEESEKDKKQNTEDE. The segment covering 162 to 171 has biased composition (basic and acidic residues); it reads ESEKDKKQNT.

This sequence belongs to the aromatic-ring hydroxylase family. KMO subfamily. The cofactor is FAD.

The protein localises to the mitochondrion outer membrane. It carries out the reaction L-kynurenine + NADPH + O2 + H(+) = 3-hydroxy-L-kynurenine + NADP(+) + H2O. It functions in the pathway cofactor biosynthesis; NAD(+) biosynthesis; quinolinate from L-kynurenine: step 1/3. In terms of biological role, catalyzes the hydroxylation of L-kynurenine (L-Kyn) to form 3-hydroxy-L-kynurenine (L-3OHKyn). Required for synthesis of quinolinic acid. The polypeptide is Kynurenine 3-monooxygenase (Cryptococcus neoformans var. neoformans serotype D (strain JEC21 / ATCC MYA-565) (Filobasidiella neoformans)).